A 612-amino-acid polypeptide reads, in one-letter code: Dihydroxy-acid dehydratase (612 aa).

A Mg(2+)-binding site is contributed by Asp81. Position 122 (Cys122) interacts with [2Fe-2S] cluster. Mg(2+) contacts are provided by Asp123 and Lys124. Lys124 is modified (N6-carboxylysine). Residue Cys193 coordinates [2Fe-2S] cluster. Glu489 provides a ligand contact to Mg(2+). The Proton acceptor role is filled by Ser515.

Belongs to the IlvD/Edd family. In terms of assembly, homodimer. The cofactor is [2Fe-2S] cluster. Mg(2+) serves as cofactor.

It catalyses the reaction (2R)-2,3-dihydroxy-3-methylbutanoate = 3-methyl-2-oxobutanoate + H2O. It carries out the reaction (2R,3R)-2,3-dihydroxy-3-methylpentanoate = (S)-3-methyl-2-oxopentanoate + H2O. It participates in amino-acid biosynthesis; L-isoleucine biosynthesis; L-isoleucine from 2-oxobutanoate: step 3/4. The protein operates within amino-acid biosynthesis; L-valine biosynthesis; L-valine from pyruvate: step 3/4. In terms of biological role, functions in the biosynthesis of branched-chain amino acids. Catalyzes the dehydration of (2R,3R)-2,3-dihydroxy-3-methylpentanoate (2,3-dihydroxy-3-methylvalerate) into 2-oxo-3-methylpentanoate (2-oxo-3-methylvalerate) and of (2R)-2,3-dihydroxy-3-methylbutanoate (2,3-dihydroxyisovalerate) into 2-oxo-3-methylbutanoate (2-oxoisovalerate), the penultimate precursor to L-isoleucine and L-valine, respectively. This Stenotrophomonas maltophilia (strain K279a) protein is Dihydroxy-acid dehydratase.